Reading from the N-terminus, the 308-residue chain is Beta-carotene hydroxylase 2, chloroplastic (308 aa).

The N-terminal 59 residues, 1 to 59 (MAAARISFSSTSRTSYYRHSPFLGPKPTPTTPSVYPITPFSPNLGSILRCRRRPSFTVC), are a transit peptide targeting the chloroplast. 2 consecutive transmembrane segments (helical) span residues 105 to 125 (YLVAAVMSSFGITSMAVMAVY) and 139 to 159 (FSEMFGTFALSVGAAVGMEFW). The 128-residue stretch at 152–279 (AAVGMEFWAR…KFNGVPYGLF (128 aa)) folds into the Fatty acid hydroxylase domain. Positions 164–169 (HKALWH) match the Histidine box-1 motif. Positions 176–180 (HESHH) match the Histidine box-2 motif. 2 helical membrane-spanning segments follow: residues 191–211 (DVFAIINAVPAIALLDYGFFH) and 215–235 (IPGLCFGAGLGITVFGMAYMF). Positions 237–242 (HDGLVH) match the Histidine box-3 motif. Positions 263–267 (HSLHH) match the Histidine box-4 motif.

The protein belongs to the sterol desaturase family.

It is found in the plastid. The protein resides in the chloroplast membrane. It carries out the reaction all-trans-beta-carotene + 4 reduced [2Fe-2S]-[ferredoxin] + 2 O2 + 4 H(+) = all-trans-zeaxanthin + 4 oxidized [2Fe-2S]-[ferredoxin] + 2 H2O. The catalysed reaction is all-trans-beta-carotene + 2 reduced [2Fe-2S]-[ferredoxin] + O2 + 2 H(+) = beta-cryptoxanthin + 2 oxidized [2Fe-2S]-[ferredoxin] + H2O. It catalyses the reaction beta-cryptoxanthin + 2 reduced [2Fe-2S]-[ferredoxin] + O2 + 2 H(+) = all-trans-zeaxanthin + 2 oxidized [2Fe-2S]-[ferredoxin] + H2O. Its activity is regulated as follows. Inhibited by o-phenanthroline and 8-hydroxyquinoline. Its function is as follows. Nonheme diiron monooxygenase involved in the biosynthesis of xanthophylls. Specific for beta-ring hydroxylations of beta-carotene. Produces beta-cryptoxanthin and zeaxanthin. Uses ferredoxin as an electron donor. The sequence is that of Beta-carotene hydroxylase 2, chloroplastic from Capsicum annuum (Capsicum pepper).